The following is a 308-amino-acid chain: Acetaldehyde dehydrogenase (308 aa).

Position 10–13 (10–13 (SGNI)) interacts with NAD(+). C128 serves as the catalytic Acyl-thioester intermediate. Residues 159 to 167 (SAGPGTRAN) and N285 contribute to the NAD(+) site.

This sequence belongs to the acetaldehyde dehydrogenase family.

The enzyme catalyses acetaldehyde + NAD(+) + CoA = acetyl-CoA + NADH + H(+). The chain is Acetaldehyde dehydrogenase from Salinispora tropica (strain ATCC BAA-916 / DSM 44818 / JCM 13857 / NBRC 105044 / CNB-440).